The primary structure comprises 804 residues: Leucine--tRNA ligase (804 aa).

A 'HIGH' region motif is present at residues 40–51 (PYPSGQGLHVGH). A 'KMSKS' region motif is present at residues 576 to 580 (KMSKS). K579 lines the ATP pocket.

The protein belongs to the class-I aminoacyl-tRNA synthetase family.

It localises to the cytoplasm. It catalyses the reaction tRNA(Leu) + L-leucine + ATP = L-leucyl-tRNA(Leu) + AMP + diphosphate. The chain is Leucine--tRNA ligase from Oceanobacillus iheyensis (strain DSM 14371 / CIP 107618 / JCM 11309 / KCTC 3954 / HTE831).